The primary structure comprises 610 residues: UvrABC system protein C (610 aa).

One can recognise a GIY-YIG domain in the interval 16–94; that stretch reads SQPGVYRMYD…IKLYQPRYNV (79 aa). Positions 204 to 239 constitute a UVR domain; it reads DQVLTQLIARMEKASQNLEFEEAARIRDQIQAVRRV.

The protein belongs to the UvrC family. In terms of assembly, interacts with UvrB in an incision complex.

The protein localises to the cytoplasm. Functionally, the UvrABC repair system catalyzes the recognition and processing of DNA lesions. UvrC both incises the 5' and 3' sides of the lesion. The N-terminal half is responsible for the 3' incision and the C-terminal half is responsible for the 5' incision. This Escherichia fergusonii (strain ATCC 35469 / DSM 13698 / CCUG 18766 / IAM 14443 / JCM 21226 / LMG 7866 / NBRC 102419 / NCTC 12128 / CDC 0568-73) protein is UvrABC system protein C.